Reading from the N-terminus, the 624-residue chain is Phosphomethylpyrimidine synthase (624 aa).

The tract at residues 48-70 (SDTHTSQGREKNPPLTVYDTSGP) is disordered. Substrate contacts are provided by residues Asn229, Met258, Tyr287, His323, 343–345 (SRG), 384–387 (DGLR), and Glu423. His427 contributes to the Zn(2+) binding site. Tyr450 contributes to the substrate binding site. His491 contributes to the Zn(2+) binding site. Residues Cys571, Cys574, and Cys579 each coordinate [4Fe-4S] cluster.

The protein belongs to the ThiC family. Homodimer. The cofactor is [4Fe-4S] cluster.

It carries out the reaction 5-amino-1-(5-phospho-beta-D-ribosyl)imidazole + S-adenosyl-L-methionine = 4-amino-2-methyl-5-(phosphooxymethyl)pyrimidine + CO + 5'-deoxyadenosine + formate + L-methionine + 3 H(+). It functions in the pathway cofactor biosynthesis; thiamine diphosphate biosynthesis. Functionally, catalyzes the synthesis of the hydroxymethylpyrimidine phosphate (HMP-P) moiety of thiamine from aminoimidazole ribotide (AIR) in a radical S-adenosyl-L-methionine (SAM)-dependent reaction. The protein is Phosphomethylpyrimidine synthase of Nitrosococcus oceani (strain ATCC 19707 / BCRC 17464 / JCM 30415 / NCIMB 11848 / C-107).